The chain runs to 430 residues: Serine--tRNA ligase (430 aa).

A disordered region spans residues 41 to 60 (QSRTQDLQNERNVRSKSIGK). Position 236-238 (236-238 (TAE)) interacts with L-serine. 267 to 269 (RSE) lines the ATP pocket. Residue E290 coordinates L-serine. 354 to 357 (EISS) lines the ATP pocket. Residue S390 coordinates L-serine.

The protein belongs to the class-II aminoacyl-tRNA synthetase family. Type-1 seryl-tRNA synthetase subfamily. As to quaternary structure, homodimer. The tRNA molecule binds across the dimer.

It is found in the cytoplasm. It catalyses the reaction tRNA(Ser) + L-serine + ATP = L-seryl-tRNA(Ser) + AMP + diphosphate + H(+). The catalysed reaction is tRNA(Sec) + L-serine + ATP = L-seryl-tRNA(Sec) + AMP + diphosphate + H(+). The protein operates within aminoacyl-tRNA biosynthesis; selenocysteinyl-tRNA(Sec) biosynthesis; L-seryl-tRNA(Sec) from L-serine and tRNA(Sec): step 1/1. Catalyzes the attachment of serine to tRNA(Ser). Is also able to aminoacylate tRNA(Sec) with serine, to form the misacylated tRNA L-seryl-tRNA(Sec), which will be further converted into selenocysteinyl-tRNA(Sec). The polypeptide is Serine--tRNA ligase (Alteromonas mediterranea (strain DSM 17117 / CIP 110805 / LMG 28347 / Deep ecotype)).